A 95-amino-acid polypeptide reads, in one-letter code: Aspartyl/glutamyl-tRNA(Asn/Gln) amidotransferase subunit C (95 aa).

The protein belongs to the GatC family. In terms of assembly, heterotrimer of A, B and C subunits.

The enzyme catalyses L-glutamyl-tRNA(Gln) + L-glutamine + ATP + H2O = L-glutaminyl-tRNA(Gln) + L-glutamate + ADP + phosphate + H(+). The catalysed reaction is L-aspartyl-tRNA(Asn) + L-glutamine + ATP + H2O = L-asparaginyl-tRNA(Asn) + L-glutamate + ADP + phosphate + 2 H(+). Allows the formation of correctly charged Asn-tRNA(Asn) or Gln-tRNA(Gln) through the transamidation of misacylated Asp-tRNA(Asn) or Glu-tRNA(Gln) in organisms which lack either or both of asparaginyl-tRNA or glutaminyl-tRNA synthetases. The reaction takes place in the presence of glutamine and ATP through an activated phospho-Asp-tRNA(Asn) or phospho-Glu-tRNA(Gln). In Sinorhizobium fredii (strain NBRC 101917 / NGR234), this protein is Aspartyl/glutamyl-tRNA(Asn/Gln) amidotransferase subunit C.